A 494-amino-acid chain; its full sequence is MLVSGMLLVVVLTCLSVMIIMSVWRQRRLLRKMPPGPTPLPFIGNFLELDTEKFYDCLSKMRERYGPVFTIHLGPRPAVMLWGYDAVKEALIDQAEELSDRGEQAFFDWFFKGYGVVFSSGERAKQLRRFSIATLRDFGFGKRGIEERTIEETSFLIQALRDTNGATIDPTFYMSRTVSNVISSIVFGNRFEYDDKEFLSLLGMIMRSFQFMSTSTGQLFEMFYSVMKHLPGCQHQAYKEMQGLEDFIARKVEENQRTLDPNSPRDFIDSFLIRMQEEKKNPRTQFHMRNLLMTTLNLFFAGTETVSTTTRYGFLLLMKYPHIAAKMHEEIDQVIGRNRQPKYEDHLKMPYTEAVIYEIQRFVDVVPLGLPRSTTKDIKFRDFLIPKGTDVFPVLSSVLKDPKFFSNPNDFNPQHFSDDKGQFKKSNAFMPFSVGKRYCFGESLAKMELFIFFTTIMQNFCFKSPQAPQDIDVTPQYFSFAAIPPKFTMSFLPR.

Heme is bound at residue C439.

The protein belongs to the cytochrome P450 family. Heme is required as a cofactor. In terms of tissue distribution, liver.

It localises to the endoplasmic reticulum membrane. The protein localises to the microsome membrane. The catalysed reaction is an organic molecule + reduced [NADPH--hemoprotein reductase] + O2 = an alcohol + oxidized [NADPH--hemoprotein reductase] + H2O + H(+). Highly active in 7-ethoxycoumarin O-deethylation, and benzphetamine N-demethylation; moderately active in testosterone 7-alpha-hydroxylation, ethylmorphine N-demethylation, p-nitroanisole O-demethylation; and only slightly active in benzopyrene 3-hydroxylation, 7-ethoxyresorufin O-deethylation, testosterone 2-alpha-hydroxylation and testosterone 17-oxidation. Competent in the metabolic activation of aflatoxin B1. The polypeptide is Cytochrome P450 2A8 (CYP2A8) (Mesocricetus auratus (Golden hamster)).